Reading from the N-terminus, the 416-residue chain is NADH-quinone oxidoreductase subunit H (416 aa).

9 helical membrane-spanning segments follow: residues 16-36, 84-104, 124-144, 165-185, 197-217, 260-280, 288-308, 320-340, and 353-373; these read LILA…LAAI, PVYL…FAVI, LAVA…GIVL, VVSY…YAGT, STWY…SMVG, VSAL…PISL, WWPL…YIWL, FMAI…MIVA, and WASG…VVLW.

Belongs to the complex I subunit 1 family. As to quaternary structure, NDH-1 is composed of 14 different subunits. Subunits NuoA, H, J, K, L, M, N constitute the membrane sector of the complex.

Its subcellular location is the cell membrane. The catalysed reaction is a quinone + NADH + 5 H(+)(in) = a quinol + NAD(+) + 4 H(+)(out). Functionally, NDH-1 shuttles electrons from NADH, via FMN and iron-sulfur (Fe-S) centers, to quinones in the respiratory chain. The immediate electron acceptor for the enzyme in this species is believed to be menaquinone. Couples the redox reaction to proton translocation (for every two electrons transferred, four hydrogen ions are translocated across the cytoplasmic membrane), and thus conserves the redox energy in a proton gradient. This subunit may bind ubiquinone. The chain is NADH-quinone oxidoreductase subunit H from Mycobacterium sp. (strain JLS).